A 321-amino-acid chain; its full sequence is Glucokinase (321 aa).

An ATP-binding site is contributed by 8–13 (GDVGGT).

The protein belongs to the bacterial glucokinase family.

It localises to the cytoplasm. It catalyses the reaction D-glucose + ATP = D-glucose 6-phosphate + ADP + H(+). This chain is Glucokinase, found in Enterobacter sp. (strain 638).